The primary structure comprises 195 residues: U8 snoRNA-decapping enzyme (195 aa).

One can recognise a Nudix hydrolase domain in the interval 18–173 (GWRHACHALL…IGSAREQLLE (156 aa)). His-24, Arg-50, and Phe-57 together coordinate substrate. Mn(2+) is bound by residues Gly-59, Glu-76, Glu-80, and His-99. The short motif at 61-82 (FVDTQDRSLEDGLNRELREELG) is the Nudix box element. Gln-170 is a binding site for substrate. Glu-173 is a Mn(2+) binding site.

This sequence belongs to the Nudix hydrolase family. NUDT16 subfamily. As to quaternary structure, homodimer. Mg(2+) is required as a cofactor. The cofactor is Mn(2+). Co(2+) serves as cofactor. In terms of tissue distribution, expressed strongly in lung, kidney, adrenal gland, testis, heart and brain.

The protein localises to the nucleus. The protein resides in the nucleoplasm. It localises to the nucleolus. Its subcellular location is the cytoplasm. The enzyme catalyses a 5'-end (N(7)-methyl 5'-triphosphoguanosine)-ribonucleoside in mRNA + H2O = N(7)-methyl-GDP + a 5'-end phospho-ribonucleoside in mRNA + 2 H(+). It carries out the reaction IDP + H2O = IMP + phosphate + H(+). The catalysed reaction is dIDP + H2O = dIMP + phosphate + H(+). It catalyses the reaction a 5'-end NAD(+)-phospho-ribonucleoside in mRNA + H2O = a 5'-end phospho-adenosine-phospho-ribonucleoside in mRNA + beta-nicotinamide D-ribonucleotide + 2 H(+). The enzyme catalyses a 5'-end FAD-phospho-ribonucleoside in mRNA + H2O = a 5'-end phospho-adenosine-phospho-ribonucleoside in mRNA + FMN + 2 H(+). It carries out the reaction a 5'-end CoA-ribonucleoside in mRNA + H2O = a 5'-end phospho-adenosine-phospho-ribonucleoside in mRNA + (R)-4'-phosphopantetheine + 2 H(+). The phosphatase activity is inhibited by the product IMP. Its function is as follows. RNA-binding and decapping enzyme that catalyzes the cleavage of the cap structure of snoRNAs and mRNAs in a metal-dependent manner. Part of the U8 snoRNP complex that is required for the accumulation of mature 5.8S and 28S rRNA. Has diphosphatase activity and removes m7G and/or m227G caps from U8 snoRNA and leaves a 5'monophosphate on the RNA. Also catalyzes the cleavage of the cap structure on mRNAs. Does not hydrolyze cap analog structures like 7-methylguanosine nucleoside triphosphate (m7GpppG). Also hydrolysis m7G- and m227G U3-capped RNAs but with less efficiencies. Has broad substrate specificity with manganese or cobalt as cofactor and can act on various RNA species. Binds to the U8 snoRNA; metal is not required for RNA-binding. May play a role in the regulation of snoRNAs and mRNAs degradation. Also acts as a phosphatase; hydrolyzes the non-canonical purine nucleotides inosine diphosphate (IDP) and deoxyinosine diphosphate (dITP) as well as guanosine diphosphate (GDP), deoxyguanosine diphosphate (dGDP), xanthine diphosphate (XDP), inosine triphosphate (ITP) and deoxyinosine triphosphate (ITP) to their respective monophosphate derivatives and does not distinguish between the deoxy- and ribose forms. The order of activity with different substrates is IDP &gt; dIDP &gt;&gt; GDP = dGDP &gt; XDP = ITP = dITP. Binds strongly to GTP, ITP and XTP. Participates in the hydrolysis of dIDP/IDP and probably excludes non-canonical purines from RNA and DNA precursor pools, thus preventing their incorporation into RNA and DNA and avoiding chromosomal lesions. Exhibits decapping activity towards NAD-capped RNAs and FAD-capped RNAs. Exhibits decapping activity towards dpCoA-capped RNAs in vitro. This Homo sapiens (Human) protein is U8 snoRNA-decapping enzyme (NUDT16).